We begin with the raw amino-acid sequence, 84 residues long: Putative antitoxin RelB4 (84 aa).

Its function is as follows. Antitoxin component of a type II toxin-antitoxin (TA) system. Its cognate toxin is RelE4 (Potential). In Methanocaldococcus jannaschii (strain ATCC 43067 / DSM 2661 / JAL-1 / JCM 10045 / NBRC 100440) (Methanococcus jannaschii), this protein is Putative antitoxin RelB4 (relB4).